Reading from the N-terminus, the 228-residue chain is 7-cyano-7-deazaguanine synthase (228 aa).

10 to 20 (FSGGQDSTTLA) serves as a coordination point for ATP. Positions 190, 205, 208, and 211 each coordinate Zn(2+).

Belongs to the QueC family. It depends on Zn(2+) as a cofactor.

The enzyme catalyses 7-carboxy-7-deazaguanine + NH4(+) + ATP = 7-cyano-7-deazaguanine + ADP + phosphate + H2O + H(+). The protein operates within purine metabolism; 7-cyano-7-deazaguanine biosynthesis. Its function is as follows. Catalyzes the ATP-dependent conversion of 7-carboxy-7-deazaguanine (CDG) to 7-cyano-7-deazaguanine (preQ(0)). This is 7-cyano-7-deazaguanine synthase from Helicobacter pylori (strain P12).